We begin with the raw amino-acid sequence, 334 residues long: 7,8-didemethyl-8-hydroxy-5-deazariboflavin synthase (334 aa).

The Radical SAM core domain occupies 2–248; it reads VSYSKNVFVP…PDVPVQVPPN (247 aa). [4Fe-4S] cluster contacts are provided by C16, C20, and C23.

This sequence belongs to the radical SAM superfamily. CofG family. In terms of assembly, consists of two subunits, CofG and CofH. [4Fe-4S] cluster serves as cofactor.

It catalyses the reaction 5-amino-5-(4-hydroxybenzyl)-6-(D-ribitylimino)-5,6-dihydrouracil + S-adenosyl-L-methionine = 7,8-didemethyl-8-hydroxy-5-deazariboflavin + 5'-deoxyadenosine + L-methionine + NH4(+) + H(+). The protein operates within cofactor biosynthesis; coenzyme F0 biosynthesis. Its function is as follows. Catalyzes the radical-mediated synthesis of 7,8-didemethyl-8-hydroxy-5-deazariboflavin from 5-amino-5-(4-hydroxybenzyl)-6-(D-ribitylimino)-5,6-dihydrouracil. The polypeptide is 7,8-didemethyl-8-hydroxy-5-deazariboflavin synthase (Methanopyrus kandleri (strain AV19 / DSM 6324 / JCM 9639 / NBRC 100938)).